The primary structure comprises 351 residues: Ferredoxin--NADP reductase (351 aa).

8 residues coordinate FAD: T14, D33, Q41, Y46, A86, F121, D287, and T328.

This sequence belongs to the ferredoxin--NADP reductase type 2 family. Homodimer. FAD is required as a cofactor.

The enzyme catalyses 2 reduced [2Fe-2S]-[ferredoxin] + NADP(+) + H(+) = 2 oxidized [2Fe-2S]-[ferredoxin] + NADPH. This Flavobacterium psychrophilum (strain ATCC 49511 / DSM 21280 / CIP 103535 / JIP02/86) protein is Ferredoxin--NADP reductase.